Reading from the N-terminus, the 205-residue chain is Adenylyl-sulfate kinase (205 aa).

31-38 (GLSGAGKS) contributes to the ATP binding site. Serine 105 acts as the Phosphoserine intermediate in catalysis.

The protein belongs to the APS kinase family.

It catalyses the reaction adenosine 5'-phosphosulfate + ATP = 3'-phosphoadenylyl sulfate + ADP + H(+). The protein operates within sulfur metabolism; hydrogen sulfide biosynthesis; sulfite from sulfate: step 2/3. Its function is as follows. Catalyzes the synthesis of activated sulfate. The sequence is that of Adenylyl-sulfate kinase from Shewanella sp. (strain MR-4).